The sequence spans 167 residues: LIM domain transcription factor LMO4.1 (167 aa).

The segment covering 1-17 has biased composition (polar residues); sequence MVNNRVTESTTTAVSSN. The disordered stretch occupies residues 1–20; that stretch reads MVNNRVTESTTTAVSSNGGP. LIM zinc-binding domains are found at residues 22 to 84 and 86 to 148; these read KACA…LFGS and GACS…GLLS.

Its function is as follows. Acts as a positive cofactor of GATA transcription factors to establish the identity of the ventral mesoderm during gastrulation. Down-regulation in the dorsal mesoderm is necessary for the proper formation of this territory since, when present, lmo4 may bind ldb1 and restrict the availability of this cofactor for Spemman organizer transcription factors. At neurula stages, suppresses primary neuron differentiation and modulates gene expression at the Isthmic Organizer of the midbrain-hindbrain boundary. The chain is LIM domain transcription factor LMO4.1 (lmo4.1) from Xenopus tropicalis (Western clawed frog).